We begin with the raw amino-acid sequence, 356 residues long: Glutamine synthetase (356 aa).

One can recognise a GS beta-grasp domain in the interval 19–99 (VIAEYIWIGG…VICDTYTPAG (81 aa)). One can recognise a GS catalytic domain in the interval 106–356 (KRHGAAKIFS…IAETTLLWKP (251 aa)).

The protein belongs to the glutamine synthetase family. As to quaternary structure, homooctamer. In terms of tissue distribution, found at highest levels in root nodules.

Its subcellular location is the cytoplasm. It carries out the reaction L-glutamate + NH4(+) + ATP = L-glutamine + ADP + phosphate + H(+). The polypeptide is Glutamine synthetase (GLN1) (Alnus glutinosa (European alder)).